The chain runs to 300 residues: Porphobilinogen deaminase (300 aa).

Cysteine 242 is subject to S-(dipyrrolylmethanemethyl)cysteine.

The protein belongs to the HMBS family. Monomer. It depends on dipyrromethane as a cofactor.

It catalyses the reaction 4 porphobilinogen + H2O = hydroxymethylbilane + 4 NH4(+). It participates in porphyrin-containing compound metabolism; protoporphyrin-IX biosynthesis; coproporphyrinogen-III from 5-aminolevulinate: step 2/4. Functionally, tetrapolymerization of the monopyrrole PBG into the hydroxymethylbilane pre-uroporphyrinogen in several discrete steps. The protein is Porphobilinogen deaminase of Blochmanniella pennsylvanica (strain BPEN).